A 396-amino-acid chain; its full sequence is 1-deoxy-D-xylulose 5-phosphate reductoisomerase (396 aa).

NADPH contacts are provided by T13, G14, S15, I16, and N127. Residue K128 coordinates 1-deoxy-D-xylulose 5-phosphate. Residue E129 coordinates NADPH. D153 lines the Mn(2+) pocket. 1-deoxy-D-xylulose 5-phosphate contacts are provided by S154, E155, S184, and H207. Mn(2+) is bound at residue E155. G213 lines the NADPH pocket. 4 residues coordinate 1-deoxy-D-xylulose 5-phosphate: S220, N225, K226, and E229. E229 provides a ligand contact to Mn(2+).

This sequence belongs to the DXR family. Mg(2+) is required as a cofactor. The cofactor is Mn(2+).

The catalysed reaction is 2-C-methyl-D-erythritol 4-phosphate + NADP(+) = 1-deoxy-D-xylulose 5-phosphate + NADPH + H(+). The protein operates within isoprenoid biosynthesis; isopentenyl diphosphate biosynthesis via DXP pathway; isopentenyl diphosphate from 1-deoxy-D-xylulose 5-phosphate: step 1/6. Catalyzes the NADPH-dependent rearrangement and reduction of 1-deoxy-D-xylulose-5-phosphate (DXP) to 2-C-methyl-D-erythritol 4-phosphate (MEP). In Pseudomonas fluorescens (strain Pf0-1), this protein is 1-deoxy-D-xylulose 5-phosphate reductoisomerase.